Consider the following 438-residue polypeptide: Phosphoribosylamine--glycine ligase (438 aa).

Residues 107-319 (RKLFEDYDIP…LAKISKQIVD (213 aa)) form the ATP-grasp domain. 134-197 (IDNFDEPVVV…EELLLGEEYT (64 aa)) provides a ligand contact to ATP. Residues Q277, E289, and N291 each coordinate Mg(2+). Mn(2+) contacts are provided by Q277, E289, and N291.

The protein belongs to the GARS family. Requires Mg(2+) as cofactor. The cofactor is Mn(2+).

The enzyme catalyses 5-phospho-beta-D-ribosylamine + glycine + ATP = N(1)-(5-phospho-beta-D-ribosyl)glycinamide + ADP + phosphate + H(+). Its pathway is purine metabolism; IMP biosynthesis via de novo pathway; N(1)-(5-phospho-D-ribosyl)glycinamide from 5-phospho-alpha-D-ribose 1-diphosphate: step 2/2. The sequence is that of Phosphoribosylamine--glycine ligase from Methanosphaera stadtmanae (strain ATCC 43021 / DSM 3091 / JCM 11832 / MCB-3).